A 276-amino-acid chain; its full sequence is 4-deoxy-L-threo-5-hexosulose-uronate ketol-isomerase (276 aa).

His194, His196, Glu201, and His243 together coordinate Zn(2+).

It belongs to the KduI family. It depends on Zn(2+) as a cofactor.

The enzyme catalyses 5-dehydro-4-deoxy-D-glucuronate = 3-deoxy-D-glycero-2,5-hexodiulosonate. Its pathway is glycan metabolism; pectin degradation; 2-dehydro-3-deoxy-D-gluconate from pectin: step 4/5. Its function is as follows. Catalyzes the isomerization of 5-dehydro-4-deoxy-D-glucuronate to 3-deoxy-D-glycero-2,5-hexodiulosonate. This chain is 4-deoxy-L-threo-5-hexosulose-uronate ketol-isomerase, found in Caldicellulosiruptor bescii (strain ATCC BAA-1888 / DSM 6725 / KCTC 15123 / Z-1320) (Anaerocellum thermophilum).